Consider the following 551-residue polypeptide: Membrane protein insertase YidC (551 aa).

The chain crosses the membrane as a helical span at residues 3-23; the sequence is ANHIRILLLVTIAIMFISLMG. Over residues 33–47 the composition is skewed to polar residues; sequence NTKQQTSATQNNSHY. Residues 33–59 form a disordered region; the sequence is NTKQQTSATQNNSHYDNADSSTNTDVT. A compositionally biased stretch (low complexity) spans 50–59; the sequence is ADSSTNTDVT. 3 consecutive transmembrane segments (helical) span residues 361-381, 431-451, and 504-524; these read LVGN…LIFY, LSGC…YWVL, and VMMF…SGLV.

It belongs to the OXA1/ALB3/YidC family. Type 1 subfamily. Interacts with the Sec translocase complex via SecD. Specifically interacts with transmembrane segments of nascent integral membrane proteins during membrane integration.

The protein resides in the cell inner membrane. Its function is as follows. Required for the insertion and/or proper folding and/or complex formation of integral membrane proteins into the membrane. Involved in integration of membrane proteins that insert both dependently and independently of the Sec translocase complex, as well as at least some lipoproteins. Aids folding of multispanning membrane proteins. The sequence is that of Membrane protein insertase YidC from Francisella tularensis subsp. mediasiatica (strain FSC147).